The chain runs to 538 residues: Bifunctional purine biosynthesis protein PurH (538 aa).

The 151-residue stretch at 8-158 (FPIPDLHRVR…KNHVYTGVIT (151 aa)) folds into the MGS-like domain.

Belongs to the PurH family.

It carries out the reaction (6R)-10-formyltetrahydrofolate + 5-amino-1-(5-phospho-beta-D-ribosyl)imidazole-4-carboxamide = 5-formamido-1-(5-phospho-D-ribosyl)imidazole-4-carboxamide + (6S)-5,6,7,8-tetrahydrofolate. The catalysed reaction is IMP + H2O = 5-formamido-1-(5-phospho-D-ribosyl)imidazole-4-carboxamide. Its pathway is purine metabolism; IMP biosynthesis via de novo pathway; 5-formamido-1-(5-phospho-D-ribosyl)imidazole-4-carboxamide from 5-amino-1-(5-phospho-D-ribosyl)imidazole-4-carboxamide (10-formyl THF route): step 1/1. It participates in purine metabolism; IMP biosynthesis via de novo pathway; IMP from 5-formamido-1-(5-phospho-D-ribosyl)imidazole-4-carboxamide: step 1/1. The chain is Bifunctional purine biosynthesis protein PurH from Bartonella henselae (strain ATCC 49882 / DSM 28221 / CCUG 30454 / Houston 1) (Rochalimaea henselae).